The primary structure comprises 269 residues: 3-methyl-2-oxobutanoate hydroxymethyltransferase (269 aa).

The Mg(2+) site is built by Asp-50 and Asp-89. 3-methyl-2-oxobutanoate-binding positions include 50–51 (DS), Asp-89, and Lys-118. Glu-120 is a binding site for Mg(2+). Catalysis depends on Glu-187, which acts as the Proton acceptor.

The protein belongs to the PanB family. Homodecamer; pentamer of dimers. The cofactor is Mg(2+).

It is found in the cytoplasm. The catalysed reaction is 3-methyl-2-oxobutanoate + (6R)-5,10-methylene-5,6,7,8-tetrahydrofolate + H2O = 2-dehydropantoate + (6S)-5,6,7,8-tetrahydrofolate. Its pathway is cofactor biosynthesis; (R)-pantothenate biosynthesis; (R)-pantoate from 3-methyl-2-oxobutanoate: step 1/2. Functionally, catalyzes the reversible reaction in which hydroxymethyl group from 5,10-methylenetetrahydrofolate is transferred onto alpha-ketoisovalerate to form ketopantoate. The protein is 3-methyl-2-oxobutanoate hydroxymethyltransferase of Nitrosomonas eutropha (strain DSM 101675 / C91 / Nm57).